The chain runs to 218 residues: Lactosylceramide 4-alpha-galactosyltransferase (218 aa).

Positions 57–59 (DTD) match the DXD motif motif.

The protein belongs to the glycosyltransferase 32 family.

It localises to the golgi apparatus membrane. It carries out the reaction a beta-D-Gal-(1-&gt;4)-beta-D-Glc-(1&lt;-&gt;1)-Cer(d18:1(4E)) + UDP-alpha-D-galactose = a globoside Gb3Cer (d18:1(4E)) + UDP + H(+). The enzyme catalyses a beta-D-Gal-(1&lt;-&gt;1')-ceramide + UDP-alpha-D-galactose = alpha-D-Gal-(1-&gt;4)-beta-D-Gal-(1&lt;-&gt;1')-Cer + UDP + H(+). The protein operates within glycolipid biosynthesis. Catalyzes the transfer of galactose from UDP-alpha-D-galactose to lactosylceramide/beta-D-galactosyl-(1-&gt;4)-beta-D-glucosyl-(1&lt;-&gt;1)-ceramide(d18:1(4E)) to produce globotriaosylceramide/globoside Gb3Cer (d18:1(4E)). Also able to transfer galactose to galactosylceramide/beta-D-Gal-(1&lt;-&gt;1')-Cer. Globoside Gb3Cer is a glycosphingolipid of the globo serie, one of the major types of neutral root structures of glycosphingolipids, that constitute a significant portion of mammalian cell membranes. This is Lactosylceramide 4-alpha-galactosyltransferase (A4GALT) from Pongo pygmaeus (Bornean orangutan).